Here is a 965-residue protein sequence, read N- to C-terminus: Aminopeptidase N (965 aa).

Over 2 to 8 the chain is Cytoplasmic; the sequence is AKGFYIS. Residues 9–32 traverse the membrane as a helical; Signal-anchor for type II membrane protein segment; the sequence is KTLGILGILLGVAAVCTIIALSVV. A cytosolic Ser/Thr-rich junction region spans residues 33-68; that stretch reads YAQEKNRNAENSAIAPTLPGSTSATTSTTNPAIDES. The Extracellular segment spans residues 33 to 965; that stretch reads YAQEKNRNAE…VVLKWFTENS (933 aa). A disordered region spans residues 44 to 68; that stretch reads SAIAPTLPGSTSATTSTTNPAIDES. The span at 47 to 64 shows a compositional bias: low complexity; the sequence is APTLPGSTSATTSTTNPA. A metalloprotease region spans residues 69 to 965; sequence KPWNQYRLPK…VVLKWFTENS (897 aa). N-linked (GlcNAc...) asparagine glycosylation is found at asparagine 114 and asparagine 128. Tyrosine 176 carries the sulfotyrosine modification. N-linked (GlcNAc...) asparagine glycosylation is found at asparagine 234, asparagine 242, and asparagine 264. Residue 351-355 coordinates substrate; the sequence is GAMEN. Zn(2+) is bound at residue histidine 387. The active-site Proton acceptor is the glutamate 388. 2 residues coordinate Zn(2+): histidine 391 and glutamate 410. N-linked (GlcNAc...) asparagine glycosylation is found at asparagine 555, asparagine 606, and asparagine 624. Residues cysteine 760 and cysteine 767 are joined by a disulfide bond. Asparagine 780 is a glycosylation site (N-linked (GlcNAc...) asparagine). Cysteine 797 and cysteine 833 are oxidised to a cystine. The residue at position 852 (tyrosine 852) is a Phosphotyrosine.

The protein belongs to the peptidase M1 family. As to quaternary structure, homodimer. Interacts with SLC6A19. Requires Zn(2+) as cofactor. In terms of processing, sulfated. N- and O-glycosylated. Post-translationally, may undergo proteolysis and give rise to a soluble form. In terms of tissue distribution, widely distributed throughout the CNS. Particularly abundant in kidney and intestinal microvilli, also detected in lung and liver. Weakly expressed in heart and aorta.

The protein localises to the cell membrane. The enzyme catalyses Release of an N-terminal amino acid, Xaa-|-Yaa- from a peptide, amide or arylamide. Xaa is preferably Ala, but may be most amino acids including Pro (slow action). When a terminal hydrophobic residue is followed by a prolyl residue, the two may be released as an intact Xaa-Pro dipeptide.. Functionally, broad specificity aminopeptidase which plays a role in the final digestion of peptides generated from hydrolysis of proteins by gastric and pancreatic proteases. Also involved in the processing of various peptides including peptide hormones, such as angiotensin III and IV, neuropeptides, and chemokines. May also be involved the cleavage of peptides bound to major histocompatibility complex class II molecules of antigen presenting cells. May have a role in angiogenesis and promote cholesterol crystallization. May have a role in amino acid transport by acting as binding partner of amino acid transporter SLC6A19 and regulating its activity. The sequence is that of Aminopeptidase N (Anpep) from Rattus norvegicus (Rat).